Here is a 223-residue protein sequence, read N- to C-terminus: UPF0173 metal-dependent hydrolase Amet_4625 (223 aa).

It belongs to the UPF0173 family.

This chain is UPF0173 metal-dependent hydrolase Amet_4625, found in Alkaliphilus metalliredigens (strain QYMF).